The following is a 197-amino-acid chain: Guanylate kinase (197 aa).

The Guanylate kinase-like domain occupies 10–187 (GSLFIVSAPA…AYQVLRSILI (178 aa)). 17–24 (APAGTGKT) lines the ATP pocket.

The protein belongs to the guanylate kinase family.

The protein resides in the cytoplasm. It catalyses the reaction GMP + ATP = GDP + ADP. Essential for recycling GMP and indirectly, cGMP. This chain is Guanylate kinase, found in Protochlamydia amoebophila (strain UWE25).